Consider the following 240-residue polypeptide: RNA polymerase sigma factor SigI (240 aa).

Positions 56–69 (DEYSIGLFAFNEAI) match the Polymerase core binding motif. The H-T-H motif DNA-binding region spans 194 to 213 (LKHIEPRVRVSRKTLERHRK).

It belongs to the sigma-70 factor family. SigI subfamily. Interacts with RsgI.

It localises to the cytoplasm. With respect to regulation, negatively regulated by the anti-sigma-I factor RsgI. In terms of biological role, sigma factors are initiation factors that promote the attachment of RNA polymerase to specific initiation sites and are then released. This sigma factor contributes to both stress response and virulence gene expression. The protein is RNA polymerase sigma factor SigI of Bacillus anthracis.